The sequence spans 740 residues: Copalyl diphosphate synthase 2 (740 aa).

Lysine 154 is a substrate binding site. The Mg(2+) site is built by aspartate 287 and aspartate 289. The DXDD motif motif lies at 287–290 (DADD). Residue lysine 373 participates in substrate binding.

This sequence belongs to the terpene synthase family. Mg(2+) serves as cofactor.

The enzyme catalyses (2E,6E,10E)-geranylgeranyl diphosphate = (+)-copalyl diphosphate. Its pathway is secondary metabolite biosynthesis; terpenoid biosynthesis. In terms of biological role, monofunctional diterpene synthase converting geranylgeranyl diphosphate to copalyl diphosphate. In Selaginella moellendorffii (Spikemoss), this protein is Copalyl diphosphate synthase 2 (CPS2).